The primary structure comprises 841 residues: MTQVTVKQLADEVKTPVERLLQQMREAGLPHTAADEGVSDSEKQSLLTHLKSSHKAKVEEPRKITLQRKTTSTLRVAGSKSISVEVRKKKVFVQRSPEEIEAERKRELEERRAVENAARQKAEEEAKRRAEEEARRQPAAAQPAGTEAVAAPVAPVEAVREAAPVAAAPAPAADARKRDEPRRPDKPRADDNNRRGGGGDGERKNAPHRASVKEKAPAPRVAPRTTDEESDGFRRGGRGKAKLKKRNAHGFQSPTGPVVRDVQIGETITVGDLANQMSVKAAEIIKFMFKLGTPATINQVLDQETAQLVAEELGHKVTLVSDTALEDSLAESLKFEGETFSRAPVVTVMGHVDHGKTSLLDYIRRAKVAAGEAGGITQHIGAYHVETERGMVTFLDTPGHAAFTAMRARGAKATDIVILVVAADDGVMPQTIEAVQHAKAAGVPLVVAVNKIDKPGADLDRIRSELSVHGVTSEEWGGDTPFVSVSAKVGTGVDELLEAVLLQAEVLELKATPSAPGRGVVVESRLDKGRGPVATVLVQDGTLRQGDMVLVGSNYGRVRAMLDENGKPIKEAGPSIPVEILGLDGTPDAGDEMSVLSDEKKAREVALFRQGKFREVKLARAHAGKLENIFENMGQAEKKTLNIVLKSDVRGSLEALNGALNGLGNDEVQVRVVGGGVGGITESDANLALASNAVLFGFNVRADAGARKIVEQEGLDMRYYNVIYDIIEDVKKALTGMLGSDVRENILGVAEVRDVFRSPKFGAIAGCMVIEGTVYRNRPIRVLREDIVIFEGELESLRRFKDDASEVRAGMECGIGVKSYNDVKAGDKIEVYEKVQVARSL.

The tract at residues 94–258 (QRSPEEIEAE…HGFQSPTGPV (165 aa)) is disordered. Over residues 96–136 (SPEEIEAERKRELEERRAVENAARQKAEEEAKRRAEEEARR) the composition is skewed to basic and acidic residues. Positions 137–173 (QPAAAQPAGTEAVAAPVAPVEAVREAAPVAAAPAPAA) are enriched in low complexity. 3 stretches are compositionally biased toward basic and acidic residues: residues 174 to 194 (DARK…DNNR), 200 to 217 (DGER…EKAP), and 225 to 234 (TTDEESDGFR). The segment covering 235–248 (RGGRGKAKLKKRNA) has biased composition (basic residues). The tr-type G domain occupies 341–510 (SRAPVVTVMG…LLQAEVLELK (170 aa)). The tract at residues 350 to 357 (GHVDHGKT) is G1. 350–357 (GHVDHGKT) lines the GTP pocket. The segment at 375–379 (GITQH) is G2. Positions 396–399 (DTPG) are G3. GTP is bound by residues 396 to 400 (DTPGH) and 450 to 453 (NKID). Residues 450–453 (NKID) form a G4 region. Positions 486 to 488 (SAK) are G5.

The protein belongs to the TRAFAC class translation factor GTPase superfamily. Classic translation factor GTPase family. IF-2 subfamily.

Its subcellular location is the cytoplasm. In terms of biological role, one of the essential components for the initiation of protein synthesis. Protects formylmethionyl-tRNA from spontaneous hydrolysis and promotes its binding to the 30S ribosomal subunits. Also involved in the hydrolysis of GTP during the formation of the 70S ribosomal complex. This chain is Translation initiation factor IF-2, found in Pseudomonas fluorescens (strain SBW25).